Consider the following 232-residue polypeptide: Large ribosomal subunit protein uL1 (232 aa).

The protein belongs to the universal ribosomal protein uL1 family. As to quaternary structure, part of the 50S ribosomal subunit.

Binds directly to 23S rRNA. The L1 stalk is quite mobile in the ribosome, and is involved in E site tRNA release. Functionally, protein L1 is also a translational repressor protein, it controls the translation of the L11 operon by binding to its mRNA. This chain is Large ribosomal subunit protein uL1, found in Burkholderia vietnamiensis (strain G4 / LMG 22486) (Burkholderia cepacia (strain R1808)).